A 355-amino-acid chain; its full sequence is Putative [LysW]-L-2-aminoadipate/[LysW]-L-glutamate phosphate reductase (355 aa).

13–16 (SGMT) contributes to the NADP(+) binding site. The active site involves C153. N323 serves as a coordination point for NADP(+).

It belongs to the NAGSA dehydrogenase family. Type 1 subfamily. LysY sub-subfamily.

It is found in the cytoplasm. It carries out the reaction [amino-group carrier protein]-C-terminal-N-(1-carboxy-5-oxopentan-1-yl)-L-glutamine + phosphate + NADP(+) = [amino-group carrier protein]-C-terminal-N-(1-carboxy-5-phosphooxy-5-oxopentan-1-yl)-L-glutamine + NADPH + H(+). It catalyses the reaction [amino-group carrier protein]-C-terminal-gamma-(L-glutamyl-5-semialdehyde)-L-glutamate + phosphate + NADP(+) = [amino-group carrier protein]-C-terminal-gamma-(5-phospho-L-glutamyl)-L-glutamate + NADPH + H(+). It participates in amino-acid biosynthesis; L-lysine biosynthesis via AAA pathway; L-lysine from L-alpha-aminoadipate (Thermus route): step 3/5. The protein operates within amino-acid biosynthesis; L-arginine biosynthesis. In terms of biological role, involved in both the arginine and lysine biosynthetic pathways. This Aeropyrum pernix (strain ATCC 700893 / DSM 11879 / JCM 9820 / NBRC 100138 / K1) protein is Putative [LysW]-L-2-aminoadipate/[LysW]-L-glutamate phosphate reductase.